The chain runs to 506 residues: Tabersonine 6,7-epoxidase isoform 1 (506 aa).

The chain crosses the membrane as a helical span at residues 1 to 21 (MEFVVSLFAFVVSCFILLKVA). Residues asparagine 173 and asparagine 261 are each glycosylated (N-linked (GlcNAc...) asparagine). Cysteine 441 contributes to the heme binding site.

This sequence belongs to the cytochrome P450 family. Heme serves as cofactor. In terms of tissue distribution, mainly expressed in roots.

It is found in the endoplasmic reticulum membrane. The enzyme catalyses (-)-tabersonine + reduced [NADPH--hemoprotein reductase] + O2 = lochnericine + oxidized [NADPH--hemoprotein reductase] + H2O + H(+). It functions in the pathway alkaloid biosynthesis. Its function is as follows. Component of the monoterpenoid indole alkaloids (MIAs, e.g. echitovenine, tabersonine, lochnericine, 19-hydroxytabersonine and horhammericine) biosynthetic pathway; MIAs are used in cancer treatment and other medical applications. Cytochrome P450 catalyzing the conversion of tabersonine to lochnericine. In Catharanthus roseus (Madagascar periwinkle), this protein is Tabersonine 6,7-epoxidase isoform 1.